A 77-amino-acid chain; its full sequence is Large ribosomal subunit protein eL20 (77 aa).

The protein belongs to the eukaryotic ribosomal protein eL20 family. In terms of assembly, part of the 50S ribosomal subunit. Binds 23S rRNA.

The chain is Large ribosomal subunit protein eL20 from Pyrococcus furiosus (strain ATCC 43587 / DSM 3638 / JCM 8422 / Vc1).